The primary structure comprises 354 residues: Envelope protein US28 (354 aa).

At 1 to 37 (MTPTTTTAELTTEFDYDEDATPCVFTDVLNQSKPVTL) the chain is on the extracellular side. Asn-30 is a glycosylation site (N-linked (GlcNAc...) asparagine; by host). The chain crosses the membrane as a helical span at residues 38–58 (FLYGVVFLFGSIGNFLVIFTI). Residues 59–69 (TWRRRIQCSGD) lie on the Cytoplasmic side of the membrane. Residues 70-90 (VYFINLAAADLLFVCTLPLWM) traverse the membrane as a helical segment. The Extracellular segment spans residues 91–101 (QYLLDHNSLAS). A helical transmembrane segment spans residues 102 to 122 (VPCTLLTACFYVAMFASLCFI). The Cytoplasmic segment spans residues 123–145 (TEIALDRYYAIVYMRYRPVKQAC). The helical transmembrane segment at 146 to 166 (LFSIFWWIFAVIIAIPHFMVV) threads the bilayer. The Extracellular segment spans residues 167–183 (TKKDNQCMTDYDYLEVS). A helical transmembrane segment spans residues 184–204 (YPIILNVELMLGAFVIPLSVI). Residues 205–228 (SYCYYRISRIVAVSQSRHKGRIVR) are Cytoplasmic-facing. A helical membrane pass occupies residues 229-249 (VLIAVVLVFIIFWLPYHLTLF). The Extracellular segment spans residues 250 to 273 (VDTLKLLKWISSSCEFERSLKRAL). A helical transmembrane segment spans residues 274 to 294 (ILTESLAFCHCCLNPLLYVFV). Over 295 to 354 (GTKFRQELHCLLAEFRQRLFSRDVSWYHSMSFSRRGSPSRRETSSDTLSDEVCRVSQIIP) the chain is Cytoplasmic.

Belongs to the G-protein coupled receptor 1 family. In terms of assembly, interacts with host GPRASP1; this interaction targets US28 to lysosomes for degradation. Interacts with host CX3CL1/Fractalkine (via N-terminus). In terms of processing, phosphorylated. High phosphorylation occurs concomitantly with receptor endocytosis and correlate with low receptor presence at the plasma membrane.

The protein resides in the host cell membrane. Receptor for a C-C type chemokine. Binds to a great number of different CC-chemokines including CCL5/RANTES, CCL2/MCP-1, CCL3/MIP-1-alpha as well as CX3CL1/Fractalkine. Transduces signals resulting in the activation of MAP kinase signaling pathways and augmentation of intracellular calcium ion levels, leading to alterations in chemotactic behavior of vascular smooth muscle cells and macrophages. The US28 receptor also exhibits high levels of agonist-independent signaling activity and agonist-independent endocytosis. Interacts with the host Gi complex without activating it, thereby probably interfering with the chemokine-Gi signaling. May also function as a G protein sink to sequester G protein from the cell surface via internalization. Interacts with endogenous Gaq/11 subunits and thereby constitutively activates phospholipase C. This is Envelope protein US28 (US28) from Human cytomegalovirus (strain Merlin) (HHV-5).